Here is a 172-residue protein sequence, read N- to C-terminus: Small ribosomal subunit protein uS5 (172 aa).

One can recognise an S5 DRBM domain in the interval 17–80 (LREKMISVNR…EQARRNMFKV (64 aa)).

Belongs to the universal ribosomal protein uS5 family. Part of the 30S ribosomal subunit. Contacts proteins S4 and S8.

In terms of biological role, with S4 and S12 plays an important role in translational accuracy. Functionally, located at the back of the 30S subunit body where it stabilizes the conformation of the head with respect to the body. The protein is Small ribosomal subunit protein uS5 of Paraburkholderia phytofirmans (strain DSM 17436 / LMG 22146 / PsJN) (Burkholderia phytofirmans).